Reading from the N-terminus, the 223-residue chain is Cytidylate kinase (223 aa).

Position 10–18 (10–18 (GPAGTGKSS)) interacts with ATP.

This sequence belongs to the cytidylate kinase family. Type 1 subfamily.

The protein localises to the cytoplasm. It catalyses the reaction CMP + ATP = CDP + ADP. It carries out the reaction dCMP + ATP = dCDP + ADP. This is Cytidylate kinase from Mycobacterium leprae (strain Br4923).